A 222-amino-acid chain; its full sequence is N-(5'-phosphoribosyl)anthranilate isomerase (222 aa).

This sequence belongs to the TrpF family.

It carries out the reaction N-(5-phospho-beta-D-ribosyl)anthranilate = 1-(2-carboxyphenylamino)-1-deoxy-D-ribulose 5-phosphate. Its pathway is amino-acid biosynthesis; L-tryptophan biosynthesis; L-tryptophan from chorismate: step 3/5. In Rhizobium rhizogenes (strain K84 / ATCC BAA-868) (Agrobacterium radiobacter), this protein is N-(5'-phosphoribosyl)anthranilate isomerase.